Reading from the N-terminus, the 279-residue chain is Ribosomal RNA large subunit methyltransferase E (279 aa).

The segment covering 1 to 10 (MSDDDQKPED) has biased composition (basic and acidic residues). The disordered stretch occupies residues 1-66 (MSDDDQKPED…MKKGGDARAA (66 aa)). S-adenosyl-L-methionine is bound by residues G136, W138, D154, D170, and D194. Catalysis depends on K234, which acts as the Proton acceptor.

It belongs to the class I-like SAM-binding methyltransferase superfamily. RNA methyltransferase RlmE family.

The protein localises to the cytoplasm. It carries out the reaction uridine(2552) in 23S rRNA + S-adenosyl-L-methionine = 2'-O-methyluridine(2552) in 23S rRNA + S-adenosyl-L-homocysteine + H(+). Specifically methylates the uridine in position 2552 of 23S rRNA at the 2'-O position of the ribose in the fully assembled 50S ribosomal subunit. The sequence is that of Ribosomal RNA large subunit methyltransferase E from Maricaulis maris (strain MCS10) (Caulobacter maris).